A 1350-amino-acid polypeptide reads, in one-letter code: MPSFYLFAASSEGRVYTLSTNSGAWRELPYLGLEFKKICAVPNFLWAIGGDRQVYVHVHGLDVPIRIREESYENERWLPIEGFSKTLLPTDRYRYSSADGSVERGVDKIRLPSMAWQWDGDWHLDLELDGQPLTEDGWMYALDFPATYSAKKSWNSYVRRRKWVRYRRYAALNSWCAVAPLHKDPTQEPFIDVAIGGTCVPNAPAGTLCVWAITAHGRAMFRTGVSKTAPEGLRWTAVPTPTGSELAQISVGPTGLVWAVLHNGRVIVRTGVTRDNLVGDSWLDVKTPVAASSLRIVHVSVGTDAVWCVTNDHHAWFRRGVKGEAAGISEDSAIGKGWVEMVGNISMVSVAANDQVFAIGAADRCLYHRSGVTSADPTGKKWRLIQCPMQISRTSSSLSIVSRKSGGSSSTPGSKHQSFSNLYSKEKEKGVVETCAVIETVLNSSTGSCSSNGGPPGLLKNERWKLSADSPPTIGSLNLNDRHKQRTAALRETSHASSAPAADVVEVVTGKFETQLRNPRAWSPVRSVGSVVGTEAHPESDSTVFESDSTHHGSDVFLGEDDDHTGSQFWTECGILWSCVASGAVTVDASNMPNWFNEQTSDSKVDVNANWRKDIVNKLQRRQEKLAKLQTVAKFEKAVELSSWVKSADARYQRPGGEFEDCIIELEWVSSGSGTDTNSSENSRSGDSGTFTVLSPDGAATKIQFPLSDITCVQCCSEAGAPRIAIHAPHLPVNCSPVKLQFSSDSEMEDWLSHLSSVCSQINTMVGKPAGNAIWITSELGDVFVFDPANMKAHQTSEPSEGYVEKMDVSTCETPYYNTLYNGMPCGTELEISGCVYDDADQIRFDLQSHSAVKVQPHRVEKHRVIALHLNPRFNERTTVLNSMKESEWLDEIRNDKMAFAPGATFSLKIRALQDHYLIIVNNAVYTDYKYRIDPESVTRLYVSGRIKLFNVLYRCPSLIVSMERMHWRQMGGHIKRIFNSGVDVVWGISCDNTGWVYNGGWGGMFLKGLEGSGKINPMIDTHTYYVYENQRWNPISGFTAKSLPTDRHMWSDATGRQKRSKEHTKLLSTHCEWISDWAIDYNIPGGADKEGWQYAIDFPANYHAHKKLTDCVRRRRWMKRCRLSSSGPWQELSQSKILDAALQVLDEDVDHSCSGERNTAVAAWAIASNGDVLIRHGVCSLNPRGDAWEHITSDQPLVGISVGPTGQVWTVARNGMVFFRYGISRQNPCGDAWQQVEAPAGVTFKAISVGRAGIWALDNQQRLAVRKEISRTFPEGSHWQFLPNAANVPPHTDQHCGFRSVSVGSEVWAISLNGIICRRCGITEENPAGVGWNLGIAGQWQNVSVEGYM.

4 TECPR repeats span residues 23–59, 233–271, 280–320, and 336–371; these read GAWR…VHVH, LRWT…VRTG, DSWL…FRRG, and KGWV…HRSG. Low complexity predominate over residues 396–415; that stretch reads SSLSIVSRKSGGSSSTPGSK. Disordered regions lie at residues 396 to 420 and 671 to 691; these read SSLS…QSFS and SGSG…SGTF. One can recognise a Galectin domain in the interval 816 to 955; sequence YYNTLYNGMP…RIKLFNVLYR (140 aa). TECPR repeat units lie at residues 966–1000, 1187–1223, 1232–1269, and 1278–1322; these read MHWR…VYNG, DAWE…FRYG, DAWQ…VRKE, and SHWQ…RRCG.

It belongs to the TECPR1 family.

In terms of biological role, involved in peroxisome biogenesis. In Drosophila melanogaster (Fruit fly), this protein is Tectonin beta-propeller repeat-containing protein (Pex23).